A 307-amino-acid chain; its full sequence is MIKSNIQDPPFSISRTNLFDFESEKTTNICNGNSDISYSKIHDNLIYVNPSFTESYSRFEKIKMCTFSGEIIKELPISKSPLPKFRHLPSGRYQRKYYKKIIYSPNGKYICCTDYENQGYINIEIIDNKTGYLMRKFECSDDESICFSPNDDLITFTHCNKCFTWDIKSNEKLDEITIMKHNIISIHYISNEKFIIITKKHSLKYIFNSQHYVAIRNICNKESVTIANFGNVIKFFYCPTRNYLVVLKESGINIINPETGKTKKKFVCDTINQYLFDILNKDTNNYCLATISNNNRIISKRIKKLIN.

This is an uncharacterized protein from Acanthamoeba polyphaga mimivirus (APMV).